We begin with the raw amino-acid sequence, 902 residues long: Histone-lysine N-methyltransferase CLF (902 aa).

The span at 1–14 (MASEASPSSSATRS) shows a compositional bias: low complexity. Disordered stretches follow at residues 1–33 (MASE…KEVS), 73–107 (SMER…SNNN), and 335–522 (GKTG…FMGE). Composition is skewed to basic and acidic residues over residues 15–33 (EPPK…KEVS) and 78–95 (GSCK…RDSP). The segment covering 337-357 (TGTSSDGAGTKTTPTKFSSKL) has biased composition (polar residues). The segment covering 394–403 (DKVSSSPKVK) has biased composition (low complexity). Residues 404–416 (GSGRRVGRKRNKN) show a composition bias toward basic residues. The span at 438 to 449 (SDSIASGSCSPS) shows a compositional bias: low complexity. Residues 459–473 (ATSSSQKHVKSGNSG) show a composition bias toward polar residues. Residues 531–581 (TNKLWRPLEKSLFDKGVEIFGMNSCLIARNLLSGFKSCWEVFQYMTCSENK) form the SANT domain. The 100-residue stretch at 638-737 (RKRITEKKDQ…SLGVPSQRGD (100 aa)) folds into the CXC domain. The region spanning 752 to 867 (QRVLLGISDV…AGEELFYDYR (116 aa)) is the SET domain. Tyrosine 866 is a binding site for S-adenosyl-L-methionine. A compositionally biased stretch (basic and acidic residues) spans 875–890 (AWAKKPEAPGSKKDEN). The interval 875-902 (AWAKKPEAPGSKKDENVTPSVGRPKKLA) is disordered.

This sequence belongs to the class V-like SAM-binding methyltransferase superfamily. Histone-lysine methyltransferase family. EZ subfamily. As to quaternary structure, probable component of a PcG complex. In plants, PcG complexes are probably composed of a member of the EZ family (CLF or MEA), FIE, and a member of the VEFS family (FIS2, VRN2 or EMF2). Interacts with FIE. Interacts with RING1A. Binds to ALP1. Interacts with BLI. Binds to ATX1 in the nucleus. Interacts with EOL1. Interacts (via SANT domain) with HXK1 in the nucleus. Strongly expressed throughout the apical meristem, leaf primordia, and leaves of 7-8 day-old seedling. Weakly expressed in the vasculature of hypocotyl. Strongly expressed throughout the young stages 1 and 2 floral meristems that arose on the flanks of the apex. In stage 3 and 4 flowers, it is expressed in the emerging sepal primordia and in the dome of the floral meristem. During stages 6 and 7, it is strongly expressed in developing petal and stamen, and weakly expressed in the sepals. Late in floral development, at stage 12, it is weakly expressed in all floral whorls, and expressed at intermediate level in petals and ovules.

It localises to the nucleus. It carries out the reaction L-lysyl-[histone] + S-adenosyl-L-methionine = N(6)-methyl-L-lysyl-[histone] + S-adenosyl-L-homocysteine + H(+). Functionally, polycomb group (PcG) protein. Catalytic subunit of some PcG multiprotein complex, which methylates 'Lys-27' of histone H3, leading to transcriptional repression of the affected target genes, mainly abscisic acid (ABA) responsive elements. Required to regulate floral development by repressing the AGAMOUS homeotic gene in leaves, inflorescence stems and flowers. Together with ATX1, modulates AG nucleosome methylation statement. Regulates the antero-posterior organization of the endosperm, as well as the division and elongation rates of leaf cells. PcG proteins act by forming multiprotein complexes, which are required to maintain the transcriptionally repressive state of homeotic genes throughout development. PcG proteins are not required to initiate repression, but to maintain it during later stages of development. Forms a nuclear complex with EZA1/SWN and HXK1 to target common glucose-responsive genes and regulate glucose signaling by glucose-mediated gene repression. Affects the recruitment of HXK1 to the target chromatin. This Arabidopsis thaliana (Mouse-ear cress) protein is Histone-lysine N-methyltransferase CLF.